We begin with the raw amino-acid sequence, 145 residues long: Putative pre-16S rRNA nuclease (145 aa).

Belongs to the YqgF nuclease family.

It localises to the cytoplasm. In terms of biological role, could be a nuclease involved in processing of the 5'-end of pre-16S rRNA. This chain is Putative pre-16S rRNA nuclease, found in Prochlorococcus marinus (strain MIT 9211).